We begin with the raw amino-acid sequence, 193 residues long: MKSLFRPLIVVFVVLVAVTGLAYPAVMTVFGQAVFPAQANGSLIEKGGRVVGSALIGQQFDAPQYFWGRLSATSPMPYNAAGSGGSNLGPLNPALKDQVKSRLDALKAAGTDLSQPVPVDLVTASASGLDPEISPAAADYQVARVARARKMADADVRRLVADHTSGRQFGVLGEPRVNVLKLNLALDAAQAAH.

Residues 7-27 (PLIVVFVVLVAVTGLAYPAVM) form a helical membrane-spanning segment.

Belongs to the KdpC family. As to quaternary structure, the system is composed of three essential subunits: KdpA, KdpB and KdpC.

The protein resides in the cell inner membrane. Part of the high-affinity ATP-driven potassium transport (or Kdp) system, which catalyzes the hydrolysis of ATP coupled with the electrogenic transport of potassium into the cytoplasm. This subunit acts as a catalytic chaperone that increases the ATP-binding affinity of the ATP-hydrolyzing subunit KdpB by the formation of a transient KdpB/KdpC/ATP ternary complex. The polypeptide is Potassium-transporting ATPase KdpC subunit (Burkholderia mallei (strain NCTC 10247)).